We begin with the raw amino-acid sequence, 622 residues long: MALLQISEPGMAPAPHQRRLAVGIDLGTTNSLVAAVRNSVPEVLPDEAGRVLLPSVVRYLEKGGRRIGHEAKEQAATDPRNTIVSVKRFMGRGKAEVEGAANAPYEFVDAPGMVQIRTIDGVKSPVEVSAEILATLRYRAEDSLGDELVGAVITVPAYFDDAQRQATKDAARLAGLNVLRLLNEPTAAAIAYGLDNAAEGLYAVYDLGGGTFDLSILKLTKGVFEVLAAGGDSALGGDDFDHALFGHVLAQAGIDAKTLAPEDVRLLLDRVRVLKETLSSAPEAALDVTLSSGAHLVQTISHDTFASLVEPLVQRTLTPTRKALRDAQVTPADIKGVVLVGGATRMPVIRDAVAKYFGQPPLVNLDPDQVVALGAAIQADLLAGNRGTGDDWLLLDVIPLSLGVETMGGLVEKIIPRNSTIPIARAQEFTTFKDGQTAMAIHVVQGERELVADCRSLARFELRGIPPMTAGAARIRVTYQVDADGLLSVFAREQLSGVEASVVVKPSYGLADDDIAKMLEDSFKTAEIDMRARALREAQVEAERMLEATQAALAADGELLEADERAQVDTLAAALRAVAQGDDTNAIEAATKALADGTDEFAARRMDKSIKRALSGRRLDEI.

This sequence belongs to the heat shock protein 70 family.

In terms of biological role, chaperone involved in the maturation of iron-sulfur cluster-containing proteins. Has a low intrinsic ATPase activity which is markedly stimulated by HscB. The sequence is that of Chaperone protein HscA homolog from Burkholderia orbicola (strain MC0-3).